A 330-amino-acid chain; its full sequence is Succinylglutamate desuccinylase (330 aa).

The Zn(2+) site is built by His53, Glu56, and His147. Glu210 is a catalytic residue.

The protein belongs to the AspA/AstE family. Succinylglutamate desuccinylase subfamily. The cofactor is Zn(2+).

It carries out the reaction N-succinyl-L-glutamate + H2O = L-glutamate + succinate. The protein operates within amino-acid degradation; L-arginine degradation via AST pathway; L-glutamate and succinate from L-arginine: step 5/5. Its function is as follows. Transforms N(2)-succinylglutamate into succinate and glutamate. The sequence is that of Succinylglutamate desuccinylase from Yersinia pseudotuberculosis serotype O:1b (strain IP 31758).